The following is a 121-amino-acid chain: Splicing factor 3B subunit 6 (121 aa).

The segment at 12–25 (EVNRLLYVRNLPYK) is interaction with pre-mRNA branch site. An RRM domain is found at 15 to 90 (RLLYVRNLPY…RYLVVLYYQS (76 aa)).

This sequence belongs to the SF3B6 family. Component of splicing factor SF3B complex. Component of the U11/U12 snRNPs that are part of the U12-type spliceosome.

It is found in the nucleus. Functionally, involved in pre-mRNA splicing as a component of the splicing factor SF3B complex. SF3B complex is required for 'A' complex assembly formed by the stable binding of U2 snRNP to the branchpoint sequence (BPS) in pre-mRNA. Directly contacts the pre-mRNA branch site adenosine for the first catalytic step of splicing. Enters the spliceosome and associates with the pre-mRNA branch site as part of the 17S U2 or, in the case of the minor spliceosome, as part of the 18S U11/U12 snRNP complex, and thus may facilitate the interaction of these snRNP with the branch sites of U2 and U12 respectively. The polypeptide is Splicing factor 3B subunit 6 (Drosophila melanogaster (Fruit fly)).